Consider the following 307-residue polypeptide: Aspartate carbamoyltransferase catalytic subunit (307 aa).

Residues Arg56 and Thr57 each contribute to the carbamoyl phosphate site. Lys84 provides a ligand contact to L-aspartate. Positions 106, 136, and 139 each coordinate carbamoyl phosphate. 2 residues coordinate L-aspartate: Arg169 and Arg221. Residues Ala262 and Pro263 each coordinate carbamoyl phosphate.

It belongs to the aspartate/ornithine carbamoyltransferase superfamily. ATCase family. As to quaternary structure, heterododecamer (2C3:3R2) of six catalytic PyrB chains organized as two trimers (C3), and six regulatory PyrI chains organized as three dimers (R2).

It carries out the reaction carbamoyl phosphate + L-aspartate = N-carbamoyl-L-aspartate + phosphate + H(+). It participates in pyrimidine metabolism; UMP biosynthesis via de novo pathway; (S)-dihydroorotate from bicarbonate: step 2/3. Its function is as follows. Catalyzes the condensation of carbamoyl phosphate and aspartate to form carbamoyl aspartate and inorganic phosphate, the committed step in the de novo pyrimidine nucleotide biosynthesis pathway. The sequence is that of Aspartate carbamoyltransferase catalytic subunit from Streptococcus pneumoniae (strain JJA).